Consider the following 474-residue polypeptide: Hepatocyte nuclear factor 4-alpha (474 aa).

Positions 57–132 (SALCAICGDR…AGMKKEAVQN (76 aa)) form a DNA-binding region, nuclear receptor. 2 NR C4-type zinc fingers span residues 60 to 80 (CAICGDRATGKHYGASSCDGC) and 96 to 120 (CRFSRQCVVDKDKRNQCRYCRLKKC). 2 positions are modified to phosphoserine: Ser-142 and Ser-143. Phosphotyrosine is present on Tyr-144. The NR LBD domain occupies 147–377 (SSLPSINALL…NLLQEMLLGG (231 aa)). Position 166 is a phosphothreonine (Thr-166). Ser-167 bears the Phosphoserine mark. Residues Lys-234 and Lys-307 each participate in a glycyl lysine isopeptide (Lys-Gly) (interchain with G-Cter in ubiquitin) cross-link. Ser-313 carries the post-translational modification Phosphoserine; by AMPK. The short motif at 368–376 (NLLQEMLLG) is the 9aaTAD element. The segment at 419–447 (EWPRPRGQAATPETPQPSPPGGSGSEPYK) is disordered. A phosphothreonine mark is found at Thr-429 and Thr-432. Ser-436 bears the Phosphoserine mark. Lys-458 carries the post-translational modification N6-acetyllysine.

The protein belongs to the nuclear hormone receptor family. NR2 subfamily. As to quaternary structure, homodimerization is required for HNF4-alpha to bind to its recognition site. Interacts with CLOCK, BMAL1, CRY1, CRY2, PER1 and PER2. Interacts with NR0B2/SHP; the resulting heterodimer is transcriptionally inactive. Interacts with DDX3X; this interaction disrupts the interaction between HNF4 and NR0B2 that forms inactive heterodimers and enhances the formation of active HNF4 homodimers. Phosphorylated on tyrosine residue(s); phosphorylation is important for its DNA-binding activity. Phosphorylation may directly or indirectly play a regulatory role in the subnuclear distribution. Phosphorylation at Ser-313 by AMPK reduces the ability to form homodimers and bind DNA. Post-translationally, acetylation at Lys-458 lowers transcriptional activation by about two-fold.

The protein resides in the nucleus. Functionally, transcriptional regulator which controls the expression of hepatic genes during the transition of endodermal cells to hepatic progenitor cells, facilitating the recruitment of RNA pol II to the promoters of target genes. Activates the transcription of CYP2C38. Represses the CLOCK-BMAL1 transcriptional activity and is essential for circadian rhythm maintenance and period regulation in the liver and colon cells. The chain is Hepatocyte nuclear factor 4-alpha (HNF4A) from Homo sapiens (Human).